The sequence spans 331 residues: 3-dehydroquinate synthase homolog (331 aa).

The protein belongs to the archaeal-type DHQ synthase family.

This chain is 3-dehydroquinate synthase homolog, found in Aquifex aeolicus (strain VF5).